Here is a 503-residue protein sequence, read N- to C-terminus: Glycerol kinase (503 aa).

Position 14 (Thr-14) interacts with ADP. 3 residues coordinate ATP: Thr-14, Thr-15, and Ser-16. Thr-14 contributes to the sn-glycerol 3-phosphate binding site. An ADP-binding site is contributed by Arg-18. Positions 84, 85, 136, and 246 each coordinate sn-glycerol 3-phosphate. Residues Arg-84, Glu-85, Tyr-136, Asp-246, and Gln-247 each contribute to the glycerol site. ADP-binding residues include Thr-268 and Gly-311. Positions 268, 311, 315, and 412 each coordinate ATP. ADP contacts are provided by Gly-412 and Asn-416. Residues 468-481 show a composition bias toward basic and acidic residues; that stretch reads ERTFSPDSDNEKRE. The interval 468–489 is disordered; sequence ERTFSPDSDNEKRERRYKGWKK.

This sequence belongs to the FGGY kinase family.

The catalysed reaction is glycerol + ATP = sn-glycerol 3-phosphate + ADP + H(+). Its pathway is polyol metabolism; glycerol degradation via glycerol kinase pathway; sn-glycerol 3-phosphate from glycerol: step 1/1. Inhibited by fructose 1,6-bisphosphate (FBP). Functionally, key enzyme in the regulation of glycerol uptake and metabolism. Catalyzes the phosphorylation of glycerol to yield sn-glycerol 3-phosphate. The sequence is that of Glycerol kinase from Haemophilus influenzae (strain ATCC 51907 / DSM 11121 / KW20 / Rd).